The following is a 466-amino-acid chain: Cocosin 1 (466 aa).

An N-terminal signal peptide occupies residues 1-22 (MGSSSLLSFSLCLLLLCHLSQA). 2 cysteine pairs are disulfide-bonded: Cys-45–Cys-78 and Cys-121–Cys-288. 2 Cupin type-1 domains span residues 50–242 (LNAL…ELAR) and 294–443 (QNIG…DEAR).

This sequence belongs to the 11S seed storage protein (globulins) family. Hexamer; each subunit is composed of an acidic and a basic chain derived from a single precursor and linked by a disulfide bond. As to expression, endosperm of the seeds.

Seed storage protein. In Cocos nucifera (Coconut palm), this protein is Cocosin 1.